Reading from the N-terminus, the 144-residue chain is Large-conductance mechanosensitive channel (144 aa).

2 helical membrane passes run 21–41 and 76–96; these read VGII…ANVI and GIFL…FCII. Positions 105-144 are disordered; the sequence is QRGGKTRRAVQTECGRDAAYRDPRSLETTKQRHGAGYNDD. Over residues 118-134 the composition is skewed to basic and acidic residues; that stretch reads CGRDAAYRDPRSLETTK.

This sequence belongs to the MscL family. Homopentamer.

It localises to the cell inner membrane. Functionally, channel that opens in response to stretch forces in the membrane lipid bilayer. May participate in the regulation of osmotic pressure changes within the cell. The polypeptide is Large-conductance mechanosensitive channel (Sodalis glossinidius (strain morsitans)).